The sequence spans 99 residues: DNA-binding protein Fis (99 aa).

Positions 75 to 94 (QTRAATMLGINRGTLRKKLK) form a DNA-binding region, H-T-H motif.

It belongs to the transcriptional regulatory Fis family. Homodimer.

Activates ribosomal RNA transcription. Plays a direct role in upstream activation of rRNA promoters. This chain is DNA-binding protein Fis, found in Pasteurella multocida (strain Pm70).